The sequence spans 700 residues: Polyribonucleotide nucleotidyltransferase (700 aa).

Residues D491 and D497 each contribute to the Mg(2+) site. The region spanning 558–617 is the KH domain; sequence PNYAVIEINPDKIRDVIGKGGATIRQLTEETGAVIDIDDAGTIRIFGENKAATKAAIAKI. The S1 motif domain occupies 627–695; the sequence is GKTYEGTVAR…NRGRIKLTMK (69 aa).

It belongs to the polyribonucleotide nucleotidyltransferase family. Component of the RNA degradosome, which is a multiprotein complex involved in RNA processing and mRNA degradation. Mg(2+) is required as a cofactor.

Its subcellular location is the cytoplasm. It carries out the reaction RNA(n+1) + phosphate = RNA(n) + a ribonucleoside 5'-diphosphate. Its function is as follows. Involved in mRNA degradation. Catalyzes the phosphorolysis of single-stranded polyribonucleotides processively in the 3'- to 5'-direction. This chain is Polyribonucleotide nucleotidyltransferase, found in Psychrobacter arcticus (strain DSM 17307 / VKM B-2377 / 273-4).